Consider the following 80-residue polypeptide: MKLTCMMIVAVLFLTAWTLVTADGTRDGLKNRFPKARLEMKNSEAPRSRGRCRPPGMVCGFPKPGPYCCSGWCFAVCLPV.

The signal sequence occupies residues 1–22 (MKLTCMMIVAVLFLTAWTLVTA). Positions 23-51 (DGTRDGLKNRFPKARLEMKNSEAPRSRGR) are excised as a propeptide. Intrachain disulfides connect cysteine 52-cysteine 69, cysteine 59-cysteine 73, and cysteine 68-cysteine 77. 4-hydroxyproline is present on proline 64.

The protein belongs to the conotoxin O1 superfamily. As to expression, expressed by the venom duct.

It localises to the secreted. This chain is Conotoxin MaIr193, found in Conus marmoreus (Marble cone).